The chain runs to 381 residues: Dual specificity protein phosphatase 6 (381 aa).

Positions 30-148 (GNERLLLMDC…FQAEFALHCE (119 aa)) constitute a Rhodanese domain. The segment at 176 to 203 (SSSDIESDLDRDPNSATDSDGSPLSNSQ) is disordered. Positions 189–203 (NSATDSDGSPLSNSQ) are enriched in polar residues. The Tyrosine-protein phosphatase domain occupies 206-349 (FPVEILPFLY…LLDFERTLGL (144 aa)). Cys-293 acts as the Phosphocysteine intermediate in catalysis.

The protein belongs to the protein-tyrosine phosphatase family. Non-receptor class dual specificity subfamily. As to quaternary structure, interacts with MAPK1/ERK2. Post-translationally, ubiquitinated by the SCF(FBXO31) complex, leading to its proteasomal degradation.

The protein localises to the cytoplasm. It carries out the reaction O-phospho-L-tyrosyl-[protein] + H2O = L-tyrosyl-[protein] + phosphate. It catalyses the reaction O-phospho-L-seryl-[protein] + H2O = L-seryl-[protein] + phosphate. The catalysed reaction is O-phospho-L-threonyl-[protein] + H2O = L-threonyl-[protein] + phosphate. Dual specificity protein phosphatase, which mediates dephosphorylation and inactivation of MAP kinases. Has a specificity for the ERK family. Plays an important role in alleviating acute postoperative pain. Necessary for the normal dephosphorylation of the long-lasting phosphorylated forms of spinal MAPK1/3 and MAP kinase p38 induced by peripheral surgery, which drives the resolution of acute postoperative allodynia. Also important for dephosphorylation of MAPK1/3 in local wound tissue, which further contributes to resolution of acute pain. The sequence is that of Dual specificity protein phosphatase 6 (Dusp6) from Mus musculus (Mouse).